The primary structure comprises 333 residues: Ketol-acid reductoisomerase (NADP(+)) (333 aa).

The KARI N-terminal Rossmann domain maps to 1 to 171; the sequence is MSNHTQPKIA…GGARANIIKT (171 aa). NADP(+)-binding positions include 14–17, arginine 37, threonine 42, and 72–75; these read YGSQ and DMVQ. The active site involves histidine 97. An NADP(+)-binding site is contributed by glycine 123. The KARI C-terminal knotted domain occupies 172 to 317; that stretch reads TFKEETETDL…KKLRAKMVWL (146 aa). Residues aspartate 180, glutamate 184, glutamate 216, and glutamate 220 each contribute to the Mg(2+) site. Serine 241 is a binding site for substrate.

It belongs to the ketol-acid reductoisomerase family. Requires Mg(2+) as cofactor.

It carries out the reaction (2R)-2,3-dihydroxy-3-methylbutanoate + NADP(+) = (2S)-2-acetolactate + NADPH + H(+). It catalyses the reaction (2R,3R)-2,3-dihydroxy-3-methylpentanoate + NADP(+) = (S)-2-ethyl-2-hydroxy-3-oxobutanoate + NADPH + H(+). Its pathway is amino-acid biosynthesis; L-isoleucine biosynthesis; L-isoleucine from 2-oxobutanoate: step 2/4. It participates in amino-acid biosynthesis; L-valine biosynthesis; L-valine from pyruvate: step 2/4. Involved in the biosynthesis of branched-chain amino acids (BCAA). Catalyzes an alkyl-migration followed by a ketol-acid reduction of (S)-2-acetolactate (S2AL) to yield (R)-2,3-dihydroxy-isovalerate. In the isomerase reaction, S2AL is rearranged via a Mg-dependent methyl migration to produce 3-hydroxy-3-methyl-2-ketobutyrate (HMKB). In the reductase reaction, this 2-ketoacid undergoes a metal-dependent reduction by NADPH to yield (R)-2,3-dihydroxy-isovalerate. The protein is Ketol-acid reductoisomerase (NADP(+)) of Xanthomonas axonopodis pv. citri (strain 306).